The following is a 695-amino-acid chain: Rho-related BTB domain-containing protein 1 (695 aa).

A rho-like region spans residues 1–210 (MDSDMDYERP…DNAIRAALIS (210 aa)). Residues 21–28 (GDNAVGKT), 84–88 (DTFGD), and 140–143 (CQLD) each bind GTP. BTB domains are found at residues 266-426 (ADVL…DEKE) and 484-551 (SDVT…SPNL). A disordered region spans residues 325 to 351 (SLGSAEEGKEGPQRTPQADPGASSGQD).

It belongs to the small GTPase superfamily. Rho family. In terms of tissue distribution, highest expression in heart and testis.

This chain is Rho-related BTB domain-containing protein 1 (Rhobtb1), found in Mus musculus (Mouse).